The chain runs to 638 residues: Threonine--tRNA ligase (638 aa).

The region spanning 1 to 61 is the TGS domain; that stretch reads MPLITLPDGN…DKDCSVKIFT (61 aa). The catalytic stretch occupies residues 243-535; it reads DHRKLGKEMD…LIENYAGKFP (293 aa). The Zn(2+) site is built by Cys335, His386, and His512.

Belongs to the class-II aminoacyl-tRNA synthetase family. As to quaternary structure, homodimer. Zn(2+) serves as cofactor.

It is found in the cytoplasm. The catalysed reaction is tRNA(Thr) + L-threonine + ATP = L-threonyl-tRNA(Thr) + AMP + diphosphate + H(+). Catalyzes the attachment of threonine to tRNA(Thr) in a two-step reaction: L-threonine is first activated by ATP to form Thr-AMP and then transferred to the acceptor end of tRNA(Thr). Also edits incorrectly charged L-seryl-tRNA(Thr). This Pelagibacter ubique (strain HTCC1062) protein is Threonine--tRNA ligase.